We begin with the raw amino-acid sequence, 403 residues long: Phosphoglycerate kinase (403 aa).

Substrate contacts are provided by residues 24-26 (DLN), arginine 39, 62-65 (HLGR), arginine 121, and arginine 161. Residues lysine 211, glycine 299, glutamate 330, and 359 to 362 (GGDS) each bind ATP.

It belongs to the phosphoglycerate kinase family. In terms of assembly, monomer.

The protein localises to the cytoplasm. It catalyses the reaction (2R)-3-phosphoglycerate + ATP = (2R)-3-phospho-glyceroyl phosphate + ADP. The protein operates within carbohydrate degradation; glycolysis; pyruvate from D-glyceraldehyde 3-phosphate: step 2/5. The protein is Phosphoglycerate kinase of Rhodococcus opacus (strain B4).